A 344-amino-acid chain; its full sequence is MIPQSVRRVVAAAPQSPVVSSLAASSAPRAGASYILSSYQPNALQKRRYSSSKPSSPDDGSSRAFAARASVPAAGTSKTPGEKRKRKAKEPVMPPLPSVPSTRHIKDEALALSTFFALHRPISVTQLLPKTVTEESFAEIFNHRKGHKATDVLSTLSQAVHDLESPMSGLRLSDNDVEDGSTKISLKHPDGTESDVYFQLNSMSGHFLPFNPPPPPEPIAEVDEAAAEAEASAAIAEEIAATAEQEPETRVYKAVVTIEETRDTNGQYKIMAHSPQLVEDDAVQPRSFLERLALRQIRYEEARQQQGIMHAISVRRQKKLKIKKKKYKKLMRRTRNERRKQDRL.

Disordered stretches follow at residues 1–27, 43–101, and 325–344; these read MIPQ…ASSA, ALQK…SVPS, and KKYK…QDRL. Positions 51–74 are enriched in low complexity; the sequence is SSKPSSPDDGSSRAFAARASVPAA. The span at 325–338 shows a compositional bias: basic residues; it reads KKYKKLMRRTRNER.

The protein belongs to the mitochondrion-specific ribosomal protein mS38 family. Component of the mitochondrial small ribosomal subunit (mt-SSU). Mature N.crassa 74S mitochondrial ribosomes consist of a small (37S) and a large (54S) subunit. The 37S small subunit contains a 16S ribosomal RNA (16S mt-rRNA) and 32 different proteins. The 54S large subunit contains a 23S rRNA (23S mt-rRNA) and 42 different proteins.

The protein resides in the mitochondrion. In terms of biological role, component of the mitochondrial ribosome (mitoribosome), a dedicated translation machinery responsible for the synthesis of mitochondrial genome-encoded proteins, including at least some of the essential transmembrane subunits of the mitochondrial respiratory chain. The mitoribosomes are attached to the mitochondrial inner membrane and translation products are cotranslationally integrated into the membrane. The sequence is that of Small ribosomal subunit protein mS38 (cox24) from Neurospora crassa (strain ATCC 24698 / 74-OR23-1A / CBS 708.71 / DSM 1257 / FGSC 987).